Consider the following 68-residue polypeptide: Protein transport protein Sec61 subunit gamma (68 aa).

Residue methionine 1 is modified to N-acetylmethionine. The Cytoplasmic segment spans residues 1–32 (MDQVMQFVEPSRQFVKDSIRLVKRCTKPDRKE). Position 18 is a phosphoserine (serine 18). A helical membrane pass occupies residues 33 to 61 (FQKIAMATAIGFAIMGFIGFFVKLIHIPI). Residues 62 to 68 (NNIIVGG) lie on the Extracellular side of the membrane.

This sequence belongs to the SecE/SEC61-gamma family. In terms of assembly, the SEC61 channel-forming translocon complex consists of channel-forming core components SEC61A1, SEC61B and SEC61G and different auxiliary components such as SEC62 and SEC63. The SEC61 channel associates with the multi-pass translocon (MPT) complex.

It localises to the endoplasmic reticulum membrane. In terms of biological role, component of SEC61 channel-forming translocon complex that mediates transport of signal peptide-containing precursor polypeptides across the endoplasmic reticulum (ER). Forms a ribosome receptor and a gated pore in the ER membrane, both functions required for cotranslational translocation of nascent polypeptides. The SEC61 channel is also involved in ER membrane insertion of transmembrane proteins: it mediates membrane insertion of the first few transmembrane segments of proteins, while insertion of subsequent transmembrane regions of multi-pass membrane proteins is mediated by the multi-pass translocon (MPT) complex. The SEC61 channel cooperates with the translocating protein TRAM1 to import nascent proteins into the ER. The polypeptide is Protein transport protein Sec61 subunit gamma (SEC61G) (Bos taurus (Bovine)).